The following is a 119-amino-acid chain: Large ribosomal subunit protein uL18 (119 aa).

The interval 1-20 is disordered; sequence MSQIDKASRRQKIKDRSRVK. Residues 9–20 are compositionally biased toward basic residues; the sequence is RRQKIKDRSRVK.

This sequence belongs to the universal ribosomal protein uL18 family. As to quaternary structure, part of the 50S ribosomal subunit; part of the 5S rRNA/L5/L18/L25 subcomplex. Contacts the 5S and 23S rRNAs.

This is one of the proteins that bind and probably mediate the attachment of the 5S RNA into the large ribosomal subunit, where it forms part of the central protuberance. The chain is Large ribosomal subunit protein uL18 from Chlorobium phaeobacteroides (strain DSM 266 / SMG 266 / 2430).